The primary structure comprises 180 residues: Endoribonuclease YbeY (180 aa).

Zn(2+)-binding residues include histidine 149, histidine 153, and histidine 159.

It belongs to the endoribonuclease YbeY family. Zn(2+) serves as cofactor.

The protein resides in the cytoplasm. Its function is as follows. Single strand-specific metallo-endoribonuclease involved in late-stage 70S ribosome quality control and in maturation of the 3' terminus of the 16S rRNA. The sequence is that of Endoribonuclease YbeY from Prochlorococcus marinus (strain MIT 9515).